The primary structure comprises 239 residues: Prolyl hydroxylase EGLN3 (239 aa).

Residues 62 to 73 form a beta(2)beta(3) 'finger-like' loop region; that stretch reads AGPRAGVSKRHL. A required for interaction with ADRB2 region spans residues 88–104; the sequence is CEAINFLLSLIDRLVLY. The region spanning 116–214 is the Fe2OG dioxygenase domain; sequence ERSKAMVACY…RYAMTVWYFD (99 aa). Positions 135, 137, and 196 each coordinate Fe cation. Arginine 205 provides a ligand contact to 2-oxoglutarate.

Interacts with ADRB2; the interaction hydroxylates ADRB2 facilitating its ubiquitination by the VHL-E3 ligase complex. Interacts with PAX2; the interaction targets PAX2 for destruction. Interacts with PKM; the interaction hydroxylates PKM in hypoxia. Interacts with WDR83; the interaction leads to almost complete elimination of HIF-mediated reporter activity. Interacts with BCL2 (via its BH4 domain); the interaction disrupts the BAX-BCL4 complex inhibiting the anti-apoptotic activity of BCL2. Requires Fe(2+) as cofactor. L-ascorbate is required as a cofactor. Post-translationally, ubiquitinated by SIAH1 and/or SIAH2 in response to the unfolded protein response (UPR), leading to its degradation. As to expression, highly expressed in vascular smooth muscle. Moderately expressed in esophagus, stomach, small bowel and aorta. Low levels in tail and kidney. Expression also in pheochromocytoma cell line PC-12.

Its subcellular location is the nucleus. It is found in the cytoplasm. It catalyses the reaction L-prolyl-[protein] + 2-oxoglutarate + O2 = trans-4-hydroxy-L-prolyl-[protein] + succinate + CO2. The catalysed reaction is L-prolyl-[hypoxia-inducible factor alpha subunit] + 2-oxoglutarate + O2 = trans-4-hydroxy-L-prolyl-[hypoxia-inducible factor alpha subunit] + succinate + CO2. Prolyl hydroxylase that mediates hydroxylation of proline residues in target proteins, such as PKM, TELO2, ATF4 and HIF1A. Target proteins are preferentially recognized via a LXXLAP motif. Cellular oxygen sensor that catalyzes, under normoxic conditions, the post-translational formation of 4-hydroxyproline in hypoxia-inducible factor (HIF) alpha proteins. Hydroxylates a specific proline found in each of the oxygen-dependent degradation (ODD) domains (N-terminal, NODD, and C-terminal, CODD) of HIF1A. Also hydroxylates HIF2A. Has a preference for the CODD site for both HIF1A and HIF2A. Hydroxylation on the NODD site by EGLN3 appears to require prior hydroxylation on the CODD site. Hydroxylated HIFs are then targeted for proteasomal degradation via the von Hippel-Lindau ubiquitination complex. Under hypoxic conditions, the hydroxylation reaction is attenuated allowing HIFs to escape degradation resulting in their translocation to the nucleus, heterodimerization with HIF1B, and increased expression of hypoxy-inducible genes. ELGN3 is the most important isozyme in limiting physiological activation of HIFs (particularly HIF2A) in hypoxia. Also hydroxylates PKM in hypoxia, limiting glycolysis. Under normoxia, hydroxylates and regulates the stability of ADRB2. Regulator of cardiomyocyte and neuronal apoptosis. In cardiomyocytes, inhibits the anti-apoptotic effect of BCL2 by disrupting the BAX-BCL2 complex. In neurons, has a NGF-induced proapoptotic effect, probably through regulating CASP3 activity. Also essential for hypoxic regulation of neutrophilic inflammation. Plays a crucial role in DNA damage response (DDR) by hydroxylating TELO2, promoting its interaction with ATR which is required for activation of the ATR/CHK1/p53 pathway. Also mediates hydroxylation of ATF4, leading to decreased protein stability of ATF4. The protein is Prolyl hydroxylase EGLN3 (Egln3) of Rattus norvegicus (Rat).